A 239-amino-acid polypeptide reads, in one-letter code: Norbelladine 4'-O-methyltransferase (239 aa).

S-adenosyl-L-methionine contacts are provided by residues V55, E77, 79-80 (GV), S85, D103, and A132. D155 contacts a divalent metal cation. Residue D157 coordinates S-adenosyl-L-methionine. Positions 181 and 182 each coordinate a divalent metal cation.

The protein belongs to the class I-like SAM-binding methyltransferase superfamily. Cation-dependent O-methyltransferase family. Mg(2+) is required as a cofactor. As to expression, mostly expressed in bulbs, and, to a lower extent, in stems and roots.

The catalysed reaction is norbelladine + S-adenosyl-L-methionine = 4'-O-methylnorbelladine + S-adenosyl-L-homocysteine + H(+). Its pathway is alkaloid biosynthesis. 4'-O-methyltransferase converting norbelladine to 4'-O-methylnorbelladine. 4'-O-methylnorbelladine is a precursor to all Amaryllidaceae alkaloids such as galanthamine, lycorine and haemanthamine, and including haemanthamine- and crinamine-type alkaloids, promising anticancer agents. In Narcissus pseudonarcissus (Daffodil), this protein is Norbelladine 4'-O-methyltransferase.